Consider the following 569-residue polypeptide: Protein Noxp20 (569 aa).

3 disordered regions span residues 1 to 87 (MSDD…GEVT), 102 to 126 (GDTG…QAGR), and 165 to 208 (ANSA…GSRG). Thr-197 is modified (phosphothreonine). Position 262 is a phosphoserine (Ser-262). The interval 404–439 (VSIDVAKGSEEEEKEEGKEEKAEEPEEDKTGGQGAK) is disordered.

The protein belongs to the FAM114 family. In terms of tissue distribution, over-expressed in brain. Also detected in lung, stomach, and in a lower extent in testis and thymus.

Its subcellular location is the cytoplasm. Functionally, may play a role in neuronal cell development. In Mus musculus (Mouse), this protein is Protein Noxp20 (Fam114a1).